The following is a 133-amino-acid chain: Fluoride-specific ion channel FluC (133 aa).

The next 4 membrane-spanning stretches (helical) occupy residues 5–25 (VPATSLILWLAVALGGALGAL), 43–63 (VATLTVNVLGSFLMGVFYVVI), 76–96 (VIMIGFLGAFTTFSTFSIESL), and 108–128 (ISYVVANVVLSISAVVVAIVL). Residues Gly83 and Thr86 each contribute to the Na(+) site.

Belongs to the fluoride channel Fluc/FEX (TC 1.A.43) family.

The protein localises to the cell inner membrane. It carries out the reaction fluoride(in) = fluoride(out). Na(+) is not transported, but it plays an essential structural role and its presence is essential for fluoride channel function. In terms of biological role, fluoride-specific ion channel. Important for reducing fluoride concentration in the cell, thus reducing its toxicity. The protein is Fluoride-specific ion channel FluC of Saccharophagus degradans (strain 2-40 / ATCC 43961 / DSM 17024).